The chain runs to 100 residues: Integration host factor subunit alpha (100 aa).

A disordered region spans residues 53-72 (FDLRDKKQRPGRNPKTGEEI).

Belongs to the bacterial histone-like protein family. As to quaternary structure, heterodimer of an alpha and a beta chain.

In terms of biological role, this protein is one of the two subunits of integration host factor, a specific DNA-binding protein that functions in genetic recombination as well as in transcriptional and translational control. The chain is Integration host factor subunit alpha from Marinobacter nauticus (strain ATCC 700491 / DSM 11845 / VT8) (Marinobacter aquaeolei).